The sequence spans 342 residues: Ribosomal RNA small subunit methyltransferase C (342 aa).

It belongs to the methyltransferase superfamily. RsmC family. As to quaternary structure, monomer.

Its subcellular location is the cytoplasm. It catalyses the reaction guanosine(1207) in 16S rRNA + S-adenosyl-L-methionine = N(2)-methylguanosine(1207) in 16S rRNA + S-adenosyl-L-homocysteine + H(+). In terms of biological role, specifically methylates the guanine in position 1207 of 16S rRNA in the 30S particle. The chain is Ribosomal RNA small subunit methyltransferase C from Citrobacter koseri (strain ATCC BAA-895 / CDC 4225-83 / SGSC4696).